A 569-amino-acid chain; its full sequence is Laccase-13 (569 aa).

Residues 1 to 21 (MEQLRPFFLLLAIFVASLVNA) form the signal peptide. 2 Plastocyanin-like domains span residues 29 to 145 (VIQE…PPLS) and 157 to 308 (REIT…YKDA). N-linked (GlcNAc...) asparagine glycosylation is present at N75. The Cu cation site is built by H79, H81, H124, and H126. N-linked (GlcNAc...) asparagine glycosylation is found at N186, N296, N330, N381, N391, and N432. One can recognise a Plastocyanin-like 3 domain in the interval 418–553 (DFPPTPPVTF…AMVFLVENGE (136 aa)). Cu cation is bound by residues H470, H473, H475, H532, C533, H534, and H538.

It belongs to the multicopper oxidase family. It depends on Cu cation as a cofactor. Mostly expressed in roots. Also detected in leaves, stems and flowers but not in siliques.

The protein resides in the secreted. It is found in the extracellular space. It localises to the apoplast. It catalyses the reaction 4 hydroquinone + O2 = 4 benzosemiquinone + 2 H2O. Functionally, lignin degradation and detoxification of lignin-derived products. In Arabidopsis thaliana (Mouse-ear cress), this protein is Laccase-13 (LAC13).